Here is a 701-residue protein sequence, read N- to C-terminus: MPRSTPLDRVRNIGIIAHIDAGKTTTTERILFYTGRNYKIGEVHEGAATMDWMEQERERGITITAAATTAHWEYAEQRYQINIIDTPGHVDFTAEVERSLRVLDGGVVVFDAVAGVEPQSETVWRQADKYNVPRICFVNKMDRMGANFDRTVQMIVDRLGAKPVPIQLPIGAEDRFQGIIDLMENKAIFYMDDVGKVQEEREIPAELAEKAKAAREYMLEAIAETDDELMMLYLEGEELQVPELRRALRAATIGNKLVPVLCGSALKNKGVQRMLDAVVLLLPSPLEIPVTKAVRPGVDSEAEDAEFIERPADENAPFTGLVFKIMADPFVGKLAYFRVYSGKLETGSYVLNTTKNKRERVGRLLQMHANHREEIKEVYAGDIAAVVGPKDTFTGDTICSPDDPVVLESIKFPEPVISVAIEPKTKADQDKMSIALSRLAEEDPTFRLNTDVETGQTIIRGMGELHLEVIVDRMMREFKVEANVGKPQVAYRESITRSVDIDSKFVRQSGGKGQYGHVKVKFEPSGEGEGYIFVNGIVGGVVPREYVPAVEAGIREAMETGVIAGYPVVDVKATLFDGSYHDVDSSEMAFKIAASMALKDGVRKGGPQILEPIMKIEVIVPEDYMGSVIGDVNSRRGRIEGMEARGNAQVVRGFVPLANMFGYVNDLRSQTQGRATYSMEFHHYEPIPRNLQEELVEKARS.

The tr-type G domain maps to 8–286 (DRVRNIGIIA…AVVLLLPSPL (279 aa)). GTP is bound by residues 17–24 (AHIDAGKT), 85–89 (DTPGH), and 139–142 (NKMD).

Belongs to the TRAFAC class translation factor GTPase superfamily. Classic translation factor GTPase family. EF-G/EF-2 subfamily.

The protein resides in the cytoplasm. Its function is as follows. Catalyzes the GTP-dependent ribosomal translocation step during translation elongation. During this step, the ribosome changes from the pre-translocational (PRE) to the post-translocational (POST) state as the newly formed A-site-bound peptidyl-tRNA and P-site-bound deacylated tRNA move to the P and E sites, respectively. Catalyzes the coordinated movement of the two tRNA molecules, the mRNA and conformational changes in the ribosome. This chain is Elongation factor G, found in Herpetosiphon aurantiacus (strain ATCC 23779 / DSM 785 / 114-95).